The sequence spans 204 residues: Large ribosomal subunit protein uL4 (204 aa).

The interval 47 to 69 is disordered; it reads KAQKNRAAVSGGGKKPWRQKGTG.

It belongs to the universal ribosomal protein uL4 family. As to quaternary structure, part of the 50S ribosomal subunit.

Functionally, one of the primary rRNA binding proteins, this protein initially binds near the 5'-end of the 23S rRNA. It is important during the early stages of 50S assembly. It makes multiple contacts with different domains of the 23S rRNA in the assembled 50S subunit and ribosome. Its function is as follows. Forms part of the polypeptide exit tunnel. The chain is Large ribosomal subunit protein uL4 from Teredinibacter turnerae (strain ATCC 39867 / T7901).